A 333-amino-acid chain; its full sequence is Galactinol synthase 1 (333 aa).

Residue K104 is part of the active site. Mn(2+)-binding residues include D120, D122, and H257.

The protein belongs to the glycosyltransferase 8 family. Galactosyltransferase subfamily. Requires a divalent metal cation as cofactor. In terms of tissue distribution, expressed in source leaves, specifically in the mesophyll.

The protein resides in the cytoplasm. The catalysed reaction is myo-inositol + UDP-alpha-D-galactose = alpha-D-galactosyl-(1-&gt;3)-1D-myo-inositol + UDP + H(+). Its function is as follows. Major galactinol synthase mainly involved in the biosynthesis of storage raffinose family oligosaccharides (RFOs) that function as osmoprotectants. May promote plant stress tolerance. In Ajuga reptans (Bugle), this protein is Galactinol synthase 1 (GOLS1).